The following is a 403-amino-acid chain: Microtubule-associated protein tau (403 aa).

A compositionally biased stretch (basic and acidic residues) spans 1–32 (MAEPRQEFDVMEDHAQGDYTLQDHEGDMEPGL). Residues 1–219 (MAEPRQEFDV…GPMPDLKNVK (219 aa)) form a disordered region. Alanine 2 carries the post-translational modification N-acetylalanine. Position 19 is a phosphotyrosine (tyrosine 19). Residue lysine 33 forms a Glycyl lysine isopeptide (Lys-Gly) (interchain with G-Cter in ubiquitin) linkage. A phosphoserine mark is found at serine 35 and serine 50. Residues 50–60 (SETSDAKSTPT) show a composition bias toward polar residues. Phosphothreonine is present on residues threonine 58, threonine 60, and threonine 71. The segment covering 90–106 (KGKDGTGPDDKKAKGAD) has biased composition (basic and acidic residues). A Phosphothreonine modification is found at threonine 115. Omega-N-methylarginine is present on arginine 117. At lysine 125 the chain carries N6,N6-dimethyllysine; alternate. Position 125 is an N6-acetyllysine; alternate (lysine 125). Threonine 131, threonine 137, threonine 138, and threonine 143 each carry phosphothreonine. Residues 136–147 (KTTPTPKTSPGT) show a composition bias toward low complexity. Residues serine 153 and serine 157 each carry the phosphoserine modification. A compositionally biased stretch (low complexity) spans 156–176 (RSGYSSPGSPGTPGSRSRTPS). Position 159 is a phosphotyrosine (tyrosine 159). 3 positions are modified to phosphoserine: serine 160, serine 161, and serine 164. 2 positions are modified to phosphothreonine: threonine 167 and threonine 174. Serine 176 carries the post-translational modification Phosphoserine. Position 179 is a phosphothreonine (threonine 179). At lysine 187 the chain carries N6-acetyllysine. Residue threonine 193 is modified to Phosphothreonine. Phosphoserine occurs at positions 197 and 199. 4 Tau/MAP repeats span residues 206 to 236 (QAAP…GGGK), 237 to 267 (VQII…GGGS), 268 to 298 (VQIV…GGGQ), and 299 to 330 (VEVK…GGGN). Lysine 216 is covalently cross-linked (Glycyl lysine isopeptide (Lys-Gly) (interchain with G-Cter in ubiquitin)). Lysine 221 bears the N6-acetyllysine; alternate mark. Lysine 221 carries the post-translational modification N6-methyllysine; alternate. A Glycyl lysine isopeptide (Lys-Gly) (interchain with G-Cter in ubiquitin); alternate cross-link involves residue lysine 221. A Phosphoserine modification is found at serine 224. A Glycyl lysine isopeptide (Lys-Gly) (interchain with G-Cter in ubiquitin) cross-link involves residue lysine 229. Lysine 243 is modified (N6-acetyllysine; alternate). Lysine 243 is covalently cross-linked (Glycyl lysine isopeptide (Lys-Gly) (interchain with G-Cter in ubiquitin); alternate). 2 positions are modified to phosphoserine: serine 247 and serine 251. Lysine 252 carries the post-translational modification N6-acetyllysine. Cysteine 253 and cysteine 284 are oxidised to a cystine. Serine 255 is subject to Phosphoserine. N6-acetyllysine; alternate is present on lysine 260. A Glycyl lysine isopeptide (Lys-Gly) (interchain with G-Cter in ubiquitin); alternate cross-link involves residue lysine 260. The residue at position 267 (serine 267) is a Phosphoserine. An N6,N6-dimethyllysine; alternate modification is found at lysine 273. N6-acetyllysine; alternate is present on residues lysine 273, lysine 279, and lysine 283. Residues lysine 273, lysine 279, and lysine 283 each participate in a glycyl lysine isopeptide (Lys-Gly) (interchain with G-Cter in ubiquitin); alternate cross-link. A Phosphoserine modification is found at serine 286. An N6-acetyllysine; alternate mark is found at lysine 293, lysine 305, and lysine 309. Glycyl lysine isopeptide (Lys-Gly) (interchain with G-Cter in ubiquitin); alternate cross-links involve residues lysine 293, lysine 305, and lysine 309. Arginine 311 is subject to Omega-N-methylarginine. A Phosphoserine modification is found at serine 314. Lysine 315 is covalently cross-linked (Glycyl lysine isopeptide (Lys-Gly) (interchain with G-Cter in ubiquitin)). A Phosphoserine modification is found at serine 318. An N6-acetyllysine; alternate modification is found at lysine 331. Lysine 331 is covalently cross-linked (Glycyl lysine isopeptide (Lys-Gly) (interchain with G-Cter in ubiquitin); alternate). Lysine 337 participates in a covalent cross-link: Glycyl lysine isopeptide (Lys-Gly) (interchain with G-Cter in ubiquitin). N6-acetyllysine; alternate is present on lysine 347. Residue lysine 347 forms a Glycyl lysine isopeptide (Lys-Gly) (interchain with G-Cter in ubiquitin); alternate linkage. Phosphotyrosine is present on tyrosine 356. A phosphoserine mark is found at serine 358 and serine 362. The interval 360–379 (VVSGDTSPRHLSNVSSTGSI) is disordered. Residues 363–378 (GDTSPRHLSNVSSTGS) show a composition bias toward polar residues. Residue threonine 365 is modified to Phosphothreonine. A phosphoserine mark is found at serine 366, serine 371, serine 378, and serine 384. Threonine 389 bears the Phosphothreonine mark.

As to quaternary structure, interacts with MARK1, MARK2, MARK3 and MARK4. Interacts with SQSTM1 when polyubiquitinated. Interacts with PSMC2 through SQSTM1. Interacts with FKBP4. Binds to CSNK1D. Interacts with SGK1. Interacts with PIN1. Interacts with LRRK2. Interacts with LRP1, leading to endocytosis; this interaction is reduced in the presence of LRPAP1/RAP. Polyubiquitinated. Requires functional TRAF6 and may provoke SQSTM1-dependent degradation by the proteasome. In terms of processing, phosphorylation at various serine and threonine residues in S-P or T-P motifs by proline-directed protein kinases (PDPK1, CDK1, CDK5, GSK3, MAPK) (a few sites per protein in interphase, more in mitosis), and at serine residues in K-X-G-S motifs by MAP/microtubule affinity-regulating kinase (MARK1, MARK2, MARK3, MARK4), causing detachment from microtubules, and their disassembly. Phosphorylation at Ser-224 by BRSK1 and BRSK2 in neurons affects ability to bind microtubules and plays a role in neuron polarization. Phosphorylated by PHK. Dephosphorylation at several serine and threonine residues by the serine/threonine phosphatase PPP5C. As to expression, expressed in neurons.

The protein localises to the cytoplasm. The protein resides in the cytosol. Its subcellular location is the cell membrane. It is found in the cytoskeleton. It localises to the cell projection. The protein localises to the axon. The protein resides in the dendrite. Functionally, promotes microtubule assembly and stability, and might be involved in the establishment and maintenance of neuronal polarity. The C-terminus binds axonal microtubules while the N-terminus binds neural plasma membrane components, suggesting that tau functions as a linker protein between both. Axonal polarity is predetermined by tau localization (in the neuronal cell) in the domain of the cell body defined by the centrosome. The short isoforms allow plasticity of the cytoskeleton whereas the longer isoforms may preferentially play a role in its stabilization. The polypeptide is Microtubule-associated protein tau (MAPT) (Capra hircus (Goat)).